The sequence spans 285 residues: Probable endonuclease 4 (285 aa).

Positions 69, 109, 145, 179, 182, 216, 229, 231, and 261 each coordinate Zn(2+).

This sequence belongs to the AP endonuclease 2 family. It depends on Zn(2+) as a cofactor.

The catalysed reaction is Endonucleolytic cleavage to 5'-phosphooligonucleotide end-products.. Functionally, endonuclease IV plays a role in DNA repair. It cleaves phosphodiester bonds at apurinic or apyrimidinic (AP) sites, generating a 3'-hydroxyl group and a 5'-terminal sugar phosphate. In Escherichia coli O81 (strain ED1a), this protein is Probable endonuclease 4.